A 453-amino-acid polypeptide reads, in one-letter code: UDP-glycosyltransferase 74E1 (453 aa).

Residues Ser279, 332–334 (SPQ), 349–357 (HCGWNSTLE), and 371–374 (WADQ) contribute to the UDP-alpha-D-glucose site.

The protein belongs to the UDP-glycosyltransferase family.

This is UDP-glycosyltransferase 74E1 (UGT74E1) from Arabidopsis thaliana (Mouse-ear cress).